We begin with the raw amino-acid sequence, 453 residues long: Protein FAM222A (453 aa).

This sequence belongs to the FAM222 family.

The chain is Protein FAM222A (Fam222a) from Mus musculus (Mouse).